The following is a 170-amino-acid chain: uncharacterized protein (170 aa).

The next 5 membrane-spanning stretches (helical) occupy residues 21–41 (NISL…AAVL), 55–75 (AYTS…TLLL), 86–106 (TGIA…YWLW), 117–137 (ISGV…VSLL), and 143–163 (FSAA…TLLP). In terms of domain architecture, EamA spans 35-161 (IIFAAVLRWT…IMLATLGSTL (127 aa)).

It belongs to the EamA transporter family.

Its subcellular location is the cell membrane. This is an uncharacterized protein from Haemophilus influenzae (strain ATCC 51907 / DSM 11121 / KW20 / Rd).